The sequence spans 1921 residues: Putative callose synthase 6 (1921 aa).

The interval methionine 1–alanine 23 is disordered. At methionine 1–arginine 492 the chain is on the cytoplasmic side. The helical transmembrane segment at methionine 493–glycine 513 threads the bilayer. Topologically, residues serine 514–threonine 526 are extracellular. A helical transmembrane segment spans residues valine 527–isoleucine 547. Over leucine 548–glutamine 560 the chain is Cytoplasmic. Residues isoleucine 561 to alanine 581 form a helical membrane-spanning segment. The Extracellular segment spans residues tyrosine 582–tyrosine 611. The helical transmembrane segment at alanine 612–phenylalanine 632 threads the bilayer. Topologically, residues arginine 633–phenylalanine 674 are cytoplasmic. Residues tryptophan 675–isoleucine 695 traverse the membrane as a helical segment. Over threonine 696–asparagine 721 the chain is Extracellular. Residues isoleucine 722–isoleucine 742 traverse the membrane as a helical segment. Residues tryptophan 743–tyrosine 1484 are Cytoplasmic-facing. A helical membrane pass occupies residues phenylalanine 1485 to leucine 1505. The Extracellular segment spans residues tyrosine 1506–serine 1540. Residues isoleucine 1541 to glycine 1561 form a helical membrane-spanning segment. The Cytoplasmic segment spans residues phenylalanine 1562–serine 1564. A helical transmembrane segment spans residues alanine 1565–leucine 1585. The Extracellular segment spans residues glycine 1586–histidine 1628. The chain crosses the membrane as a helical span at residues phenylalanine 1629–tyrosine 1649. Residues arginine 1650–tyrosine 1655 lie on the Cytoplasmic side of the membrane. A helical membrane pass occupies residues leucine 1656 to phenylalanine 1676. The Extracellular portion of the chain corresponds to asparagine 1677–arginine 1730. The helical transmembrane segment at isoleucine 1731 to leucine 1751 threads the bilayer. The Cytoplasmic portion of the chain corresponds to asparagine 1752–serine 1759. The chain crosses the membrane as a helical span at residues phenylalanine 1760 to valine 1780. Residues serine 1781–arginine 1796 lie on the Extracellular side of the membrane. Residues isoleucine 1797–phenylalanine 1817 form a helical membrane-spanning segment. Residues lysine 1818–aspartate 1823 lie on the Cytoplasmic side of the membrane. Residues leucine 1824 to valine 1844 form a helical membrane-spanning segment. At leucine 1845–asparagine 1867 the chain is on the extracellular side. Residues isoleucine 1868–glutamate 1888 form a helical membrane-spanning segment. At phenylalanine 1889 to lysine 1921 the chain is on the cytoplasmic side.

The protein belongs to the glycosyltransferase 48 family.

It localises to the cell membrane. The enzyme catalyses [(1-&gt;3)-beta-D-glucosyl](n) + UDP-alpha-D-glucose = [(1-&gt;3)-beta-D-glucosyl](n+1) + UDP + H(+). Probably involved in callose synthesis, but not required for callose formation after wounding or pathogen attack. During plant growth and development, callose is found as a transitory component of the cell plate in dividing cells, is a major component of pollen mother cell walls and pollen tubes, and is found as a structural component of plasmodesmatal canals. The polypeptide is Putative callose synthase 6 (CALS6) (Arabidopsis thaliana (Mouse-ear cress)).